Here is a 245-residue protein sequence, read N- to C-terminus: 3-deoxy-manno-octulosonate cytidylyltransferase (245 aa).

The protein belongs to the KdsB family.

Its subcellular location is the cytoplasm. It carries out the reaction 3-deoxy-alpha-D-manno-oct-2-ulosonate + CTP = CMP-3-deoxy-beta-D-manno-octulosonate + diphosphate. It functions in the pathway nucleotide-sugar biosynthesis; CMP-3-deoxy-D-manno-octulosonate biosynthesis; CMP-3-deoxy-D-manno-octulosonate from 3-deoxy-D-manno-octulosonate and CTP: step 1/1. It participates in bacterial outer membrane biogenesis; lipopolysaccharide biosynthesis. In terms of biological role, activates KDO (a required 8-carbon sugar) for incorporation into bacterial lipopolysaccharide in Gram-negative bacteria. The chain is 3-deoxy-manno-octulosonate cytidylyltransferase from Elusimicrobium minutum (strain Pei191).